Reading from the N-terminus, the 857-residue chain is ATP-dependent RNA helicase DDX24 (857 aa).

The segment at 61 to 179 (NPSRLFSSEE…SPKLPKKSKK (119 aa)) is disordered. Phosphoserine is present on residues Ser-80 and Ser-92. The segment covering 152–161 (PRKKKNKGKK) has biased composition (basic residues). Ser-170 is subject to Phosphoserine. Residues 193-221 (SAWRDLFVPKAVLRALSFLGFSAPTPIQA) carry the Q motif motif. Residues 225 to 528 (APAIRDKLDI…RILHKKHVKK (304 aa)) form the Helicase ATP-binding domain. 238 to 245 (AETGSGKT) contributes to the ATP binding site. Residues 279 to 363 (RFGATAHLGS…NEDGEEKFDA (85 aa)) are disordered. Phosphoserine occurs at positions 288 and 296. The span at 290–307 (CKDRTESGVLPEEARIET) shows a compositional bias: basic and acidic residues. Residues 309–330 (AQPSDSGVQATPETSASASAQT) are compositionally biased toward polar residues. The segment covering 345–363 (LEEKPVPKQNEDGEEKFDA) has biased composition (basic and acidic residues). Lys-370 participates in a covalent cross-link: Glycyl lysine isopeptide (Lys-Gly) (interchain with G-Cter in SUMO2). A DEAD box motif is present at residues 471-474 (DEAD). Residues 576 to 723 (DLYLYYFLMQ…LFPVQSKYMD (148 aa)) form the Helicase C-terminal domain. Lys-624 is covalently cross-linked (Glycyl lysine isopeptide (Lys-Gly) (interchain with G-Cter in SUMO2)). Residues 808-857 (RYPTQSGRPPQPVLASRNIESALSCLSRQKRRRKKPKEPRAPPQPGSSTS) are disordered. The segment covering 825–834 (NIESALSCLS) has biased composition (polar residues). Positions 835–844 (RQKRRRKKPK) are enriched in basic residues. Positions 848–857 (APPQPGSSTS) are enriched in pro residues.

Belongs to the DEAD box helicase family. DDX24/MAK5 subfamily. Interacts with FADD. Interacts with RIPK1; this interaction disrupts RLR signaling activation of IFN-dependent transcription factor IRF7. Interacts with NIP7. Interacts with EP300; this interaction prevents TP53 acetylation mediated by EP300. Ubiquitinated by MDM2 without targeting DDX24 for proteasomal degradation. Instead, polyubiquitylated DDX24 promotes interaction with NIP7, a component of pre-rRNP processing complex, and associates with pre-rRNA molecules and pre-ribosomal particles.

It localises to the cytoplasm. The protein localises to the nucleus. The enzyme catalyses ATP + H2O = ADP + phosphate + H(+). In terms of biological role, ATP-dependent RNA helicase that plays a role in various aspects of RNA metabolism including pre-mRNA splicing and is thereby involved in different biological processes such as cell cycle regulation or innate immunity. Plays an inhibitory role in TP53 transcriptional activity and subsequently in TP53 controlled cell growth arrest and senescence by inhibiting its EP300 mediated acetylation. Negatively regulates cytosolic RNA-mediated innate immune signaling at least in part by affecting RIPK1/IRF7 interactions. Alternatively, possesses antiviral activity by recognizing gammaherpesvirus transcripts in the context of lytic reactivation. Plays an essential role in cell cycle regulation in vascular smooth muscle cells by interacting with and regulating FANCA (Fanconi anemia complementation group A) mRNA. In Mus musculus (Mouse), this protein is ATP-dependent RNA helicase DDX24 (Ddx24).